Reading from the N-terminus, the 413-residue chain is Multifunctional CCA protein (413 aa).

Gly-8 and Arg-11 together coordinate ATP. 2 residues coordinate CTP: Gly-8 and Arg-11. Mg(2+)-binding residues include Asp-21 and Asp-23. The ATP site is built by Arg-91, Arg-143, and Arg-146. Residues Arg-91, Arg-143, and Arg-146 each coordinate CTP. Residues 232–333 enclose the HD domain; the sequence is TGVHVMMVID…VRLLERADAL (102 aa).

Belongs to the tRNA nucleotidyltransferase/poly(A) polymerase family. Bacterial CCA-adding enzyme type 1 subfamily. Monomer. Can also form homodimers and oligomers. Mg(2+) serves as cofactor. Requires Ni(2+) as cofactor.

The enzyme catalyses a tRNA precursor + 2 CTP + ATP = a tRNA with a 3' CCA end + 3 diphosphate. It carries out the reaction a tRNA with a 3' CCA end + 2 CTP + ATP = a tRNA with a 3' CCACCA end + 3 diphosphate. Catalyzes the addition and repair of the essential 3'-terminal CCA sequence in tRNAs without using a nucleic acid template. Adds these three nucleotides in the order of C, C, and A to the tRNA nucleotide-73, using CTP and ATP as substrates and producing inorganic pyrophosphate. tRNA 3'-terminal CCA addition is required both for tRNA processing and repair. Also involved in tRNA surveillance by mediating tandem CCA addition to generate a CCACCA at the 3' terminus of unstable tRNAs. While stable tRNAs receive only 3'-terminal CCA, unstable tRNAs are marked with CCACCA and rapidly degraded. This is Multifunctional CCA protein from Burkholderia mallei (strain NCTC 10247).